The following is a 110-amino-acid chain: ATP synthase subunit c (110 aa).

The next 3 helical transmembrane spans lie at 4-24 (FFVI…VFAA), 37-57 (ATAG…AGMG), and 81-101 (FIVG…FVLI).

Belongs to the ATPase C chain family. As to quaternary structure, F-type ATPases have 2 components, F(1) - the catalytic core - and F(0) - the membrane proton channel. F(1) has five subunits: alpha(3), beta(3), gamma(1), delta(1), epsilon(1). F(0) has three main subunits: a(1), b(2) and c(10-14). The alpha and beta chains form an alternating ring which encloses part of the gamma chain. F(1) is attached to F(0) by a central stalk formed by the gamma and epsilon chains, while a peripheral stalk is formed by the delta and b chains.

The protein resides in the cell inner membrane. Its function is as follows. F(1)F(0) ATP synthase produces ATP from ADP in the presence of a proton or sodium gradient. F-type ATPases consist of two structural domains, F(1) containing the extramembraneous catalytic core and F(0) containing the membrane proton channel, linked together by a central stalk and a peripheral stalk. During catalysis, ATP synthesis in the catalytic domain of F(1) is coupled via a rotary mechanism of the central stalk subunits to proton translocation. Functionally, key component of the F(0) channel; it plays a direct role in translocation across the membrane. A homomeric c-ring of between 10-14 subunits forms the central stalk rotor element with the F(1) delta and epsilon subunits. The polypeptide is ATP synthase subunit c (Thermodesulfovibrio yellowstonii (strain ATCC 51303 / DSM 11347 / YP87)).